The primary structure comprises 174 residues: Acetolactate synthase small subunit (174 aa).

The ACT domain occupies 4–78 (TLSVLVQDEA…NILNVQDVTN (75 aa)).

Belongs to the acetolactate synthase small subunit family. As to quaternary structure, dimer of large and small chains.

Its subcellular location is the plastid. The protein resides in the chloroplast. It carries out the reaction 2 pyruvate + H(+) = (2S)-2-acetolactate + CO2. Its pathway is amino-acid biosynthesis; L-isoleucine biosynthesis; L-isoleucine from 2-oxobutanoate: step 1/4. It functions in the pathway amino-acid biosynthesis; L-valine biosynthesis; L-valine from pyruvate: step 1/4. This is Acetolactate synthase small subunit (ilvH) from Pyropia yezoensis (Susabi-nori).